Here is a 215-residue protein sequence, read N- to C-terminus: Probable phosphoglycerate mutase GpmB (215 aa).

Residues 8–15 (RHGETEWN), 21–22 (QG), arginine 58, arginine 60, 82–85 (ELHM), and 151–152 (GI) each bind substrate. The Tele-phosphohistidine intermediate role is filled by histidine 9. Catalysis depends on glutamate 82, which acts as the Proton donor/acceptor.

This sequence belongs to the phosphoglycerate mutase family. GpmB subfamily.

It catalyses the reaction (2R)-2-phosphoglycerate = (2R)-3-phosphoglycerate. The protein operates within carbohydrate degradation; glycolysis; pyruvate from D-glyceraldehyde 3-phosphate: step 3/5. The sequence is that of Probable phosphoglycerate mutase GpmB from Serratia proteamaculans (strain 568).